A 130-amino-acid chain; its full sequence is Methylglyoxal synthase (130 aa).

The MGS-like domain occupies 1–130 (MMTRPRIALI…AELSRVEAQP (130 aa)). Substrate-binding positions include histidine 12, lysine 16, 38 to 41 (TGTT), and 58 to 59 (SG). Aspartate 64 functions as the Proton donor/acceptor in the catalytic mechanism. Histidine 91 lines the substrate pocket.

Belongs to the methylglyoxal synthase family.

The enzyme catalyses dihydroxyacetone phosphate = methylglyoxal + phosphate. Its function is as follows. Catalyzes the formation of methylglyoxal from dihydroxyacetone phosphate. The sequence is that of Methylglyoxal synthase from Cupriavidus pinatubonensis (strain JMP 134 / LMG 1197) (Cupriavidus necator (strain JMP 134)).